A 340-amino-acid polypeptide reads, in one-letter code: GTPase Obg (340 aa).

Positions 1–158 constitute an Obg domain; that stretch reads MSFIDEAKIY…KHIILKLKII (158 aa). Residues 159-325 enclose the OBG-type G domain; it reads SDVGIIGLPN…LSTLIKQIHK (167 aa). GTP is bound by residues 165 to 172, 190 to 194, 211 to 214, 278 to 281, and 306 to 308; these read GLPNAGKS, FTTLE, DIPG, NKSD, and SSI. Residues serine 172 and threonine 192 each contribute to the Mg(2+) site.

The protein belongs to the TRAFAC class OBG-HflX-like GTPase superfamily. OBG GTPase family. Monomer. The cofactor is Mg(2+).

It localises to the cytoplasm. Its function is as follows. An essential GTPase which binds GTP, GDP and possibly (p)ppGpp with moderate affinity, with high nucleotide exchange rates and a fairly low GTP hydrolysis rate. Plays a role in control of the cell cycle, stress response, ribosome biogenesis and in those bacteria that undergo differentiation, in morphogenesis control. In Ehrlichia canis (strain Jake), this protein is GTPase Obg.